The sequence spans 629 residues: Embryonic polyadenylate-binding protein A (629 aa).

RRM domains lie at 11–89, 99–175, 191–268, and 294–370; these read ASLY…WSQR, GNVF…HFKS, TNVY…RAQK, and VNLY…LAQR. The 78-residue stretch at 539 to 616 folds into the PABC domain; sequence QEPLTASLLA…AVAVLQAHQA (78 aa).

Belongs to the polyadenylate-binding protein type-1 family. Interacts with dazl in an RNA-independent manner. The C-terminus can self-associate and also interact with the C-terminus of pabpc1, independently of RNA. RRM 1 and RRM 2 interact with both eif4g1 and paip1, and the C-terminus also interacts with paip1. Prior to oocyte maturation, found in a complex with dazl and pum2 proteins and spdy1 mRNA; pum2 dissociates from the complex during maturation. Interacts with the translation termination factor sup35/erf3. As to expression, expressed in adult testis, but at a reduced level compared to oocytes.

It is found in the cytoplasm. In terms of biological role, binds and protects the poly(A) tail of mRNA with or without an AU-rich element (ARE) and prevents mRNA deadenylation. Stimulates the translation of mRNAs to which it is bound during early development. The sequence is that of Embryonic polyadenylate-binding protein A (epabp-a) from Xenopus laevis (African clawed frog).